A 218-amino-acid polypeptide reads, in one-letter code: Ras-related protein RABA1i (218 aa).

GTP is bound at residue 20-27 (GDSGVGKS). The Effector region signature appears at 42–50 (SRATIGVEF). Residues 68-72 (DTAGQ), 126-129 (NKAD), and 156-157 (SA) contribute to the GTP site. Residues cysteine 215 and cysteine 216 are each lipidated (S-geranylgeranyl cysteine).

Belongs to the small GTPase superfamily. Rab family.

It localises to the cell membrane. Its function is as follows. Intracellular vesicle trafficking and protein transport. The chain is Ras-related protein RABA1i (RABA1I) from Arabidopsis thaliana (Mouse-ear cress).